Consider the following 153-residue polypeptide: Bacteriohemerythrin (153 aa).

Fe cation is bound by residues histidine 21, histidine 57, glutamate 61, histidine 76, histidine 80, histidine 115, and aspartate 120.

It belongs to the hemerythrin family. Monomer.

Oxygen-binding protein. May be involved in a storage mechanism or for delivery to oxygen-requiring enzymes. The oxygen-binding site contains two iron atoms. This chain is Bacteriohemerythrin, found in Stenotrophomonas maltophilia (strain R551-3).